The sequence spans 375 residues: MSTAGKVIKCRAAVLWEKNKPFSIEEVEVAPPKAYEVRIKIVATGICRSDDHVVNGSIITPLPAILGHEAGGIVESIGEGVTTVKPGDKVIPLFVPQCGKCRACKHPESNLCKHGDLGRAQGTLMDGTSRFTCKGKPIHHFLGVTTFSEYTVVSEISVTKIDATSPLEKVCLIGCGFSTGYGSAVKVGKVARGSICSCVWSGRVGLSAIIGCKAAGAARIIAVDINKDKFAKAKELGATECVNPQDYDKPIYQVLQEMTDGGVDFSFEVIGRLDTMVSALMCCQESHGVSVIVGVPPNAQSLTMDPMVLLSGRSWKGAVFGGYKGKDDVPKLVADFMAKKFPLEPLITNVFPFAKINEGFDLLRAGKSIRTVLTF.

Position 2 is an N-acetylserine (S2). Residues C47, H68, C98, C101, C104, C112, and C175 each coordinate Zn(2+). Residues 200-205 (WSGRVG), D224, and K229 contribute to the NAD(+) site. Residue K234 is modified to N6-succinyllysine. Position 293-295 (293-295 (VGV)) interacts with NAD(+). K340 bears the N6-succinyllysine mark. R370 is a binding site for NAD(+).

Belongs to the zinc-containing alcohol dehydrogenase family. Class-I subfamily. In terms of assembly, homodimer. It depends on Zn(2+) as a cofactor.

It localises to the cytoplasm. It catalyses the reaction a primary alcohol + NAD(+) = an aldehyde + NADH + H(+). It carries out the reaction a secondary alcohol + NAD(+) = a ketone + NADH + H(+). The chain is Alcohol dehydrogenase 1 (ADH1) from Geomys bursarius (Plains pocket gopher).